Reading from the N-terminus, the 1708-residue chain is Clathrin heavy chain 2 (1708 aa).

Residues 1–492 (MAAANAPIAM…VDNDLALKIY (492 aa)) are globular terminal domain. WD40-like repeat stretches follow at residues 25 to 67 (FVTF…RPIT), 68 to 113 (ADSA…MPEQ), 114 to 155 (VVFW…ANLA), 156 to 205 (NNQI…QALE), 206 to 270 (AHAA…PDFQ), 271 to 314 (DDFP…ISPD), and 315 to 343 (PIFL…ATVN). The segment at 462 to 478 (ENWLAEDKLECSEELGD) is binding site for the uncoating ATPase, involved in lattice disassembly. Residues 493-536 (IKARATPKVVAAFAERREFDKILIYSKQVGYTPDYLFLLQTILR) form a flexible linker region. The interval 537–648 (TDPQGAVNFA…RALQHYTELP (112 aa)) is distal segment. Residues 537–1708 (TDPQGAVNFA…AYGMPPMGSY (1172 aa)) form a heavy chain arm region. CHCR repeat units follow at residues 551-697 (QMEG…QIVV), 700-842 (AKEY…PEDF), 847-986 (ILSV…QLID), 993-1138 (LPES…VSEA), 1142-1283 (FIRA…FRLA), 1288-1434 (LNII…DLIN), and 1437-1580 (LNVL…KECF). The tract at residues 653–1708 (VMVNTHAIEP…AYGMPPMGSY (1056 aa)) is proximal segment. The tract at residues 1227-1536 (AAKIIYAFIS…YIYKKAGRWK (310 aa)) is involved in binding clathrin light chain. Positions 1564–1708 (SEDLLVYFIE…AYGMPPMGSY (145 aa)) are trimerization.

It belongs to the clathrin heavy chain family. Clathrin triskelions, composed of 3 heavy chains and 3 light chains, are the basic subunits of the clathrin coat.

It localises to the cytoplasmic vesicle membrane. The protein localises to the membrane. It is found in the coated pit. Clathrin is the major protein of the polyhedral coat of coated pits and vesicles. The chain is Clathrin heavy chain 2 from Oryza sativa subsp. japonica (Rice).